The primary structure comprises 895 residues: Protein translocase subunit SecA (895 aa).

Residues Gln89, 107-111 (GEGKT), and Asp502 contribute to the ATP site. 2 disordered regions span residues 560–579 (RRIDNQLRGRSGRQGDPGRT) and 848–884 (AAPAAEPVEAPKEGFVEDDPSTWGNPSRNDKCPCGSG). Zn(2+) contacts are provided by Cys879, Cys881, Cys890, and His891.

Belongs to the SecA family. In terms of assembly, monomer and homodimer. Part of the essential Sec protein translocation apparatus which comprises SecA, SecYEG and auxiliary proteins SecDF-YajC and YidC. It depends on Zn(2+) as a cofactor.

It localises to the cell inner membrane. It is found in the cytoplasm. The enzyme catalyses ATP + H2O + cellular proteinSide 1 = ADP + phosphate + cellular proteinSide 2.. Part of the Sec protein translocase complex. Interacts with the SecYEG preprotein conducting channel. Has a central role in coupling the hydrolysis of ATP to the transfer of proteins into and across the cell membrane, serving both as a receptor for the preprotein-SecB complex and as an ATP-driven molecular motor driving the stepwise translocation of polypeptide chains across the membrane. The sequence is that of Protein translocase subunit SecA from Ruegeria sp. (strain TM1040) (Silicibacter sp.).